Here is a 203-residue protein sequence, read N- to C-terminus: Holliday junction branch migration complex subunit RuvA (203 aa).

Positions 1 to 63 (MIGQLSGKVD…EEHIHLYGFL (63 aa)) are domain I. The segment at 64–142 (TLEEKIFFNL…KISSGSAIIK (79 aa)) is domain II. Residues 143 to 149 (ESLNIKN) are flexible linker. A domain III region spans residues 150 to 203 (ITPVASNEVIKALVNLGFSRFEAQNAVQGIITQNPEISIDELIKTALKNRNSNF).

The protein belongs to the RuvA family. As to quaternary structure, homotetramer. Forms an RuvA(8)-RuvB(12)-Holliday junction (HJ) complex. HJ DNA is sandwiched between 2 RuvA tetramers; dsDNA enters through RuvA and exits via RuvB. An RuvB hexamer assembles on each DNA strand where it exits the tetramer. Each RuvB hexamer is contacted by two RuvA subunits (via domain III) on 2 adjacent RuvB subunits; this complex drives branch migration. In the full resolvosome a probable DNA-RuvA(4)-RuvB(12)-RuvC(2) complex forms which resolves the HJ.

The protein resides in the cytoplasm. Functionally, the RuvA-RuvB-RuvC complex processes Holliday junction (HJ) DNA during genetic recombination and DNA repair, while the RuvA-RuvB complex plays an important role in the rescue of blocked DNA replication forks via replication fork reversal (RFR). RuvA specifically binds to HJ cruciform DNA, conferring on it an open structure. The RuvB hexamer acts as an ATP-dependent pump, pulling dsDNA into and through the RuvAB complex. HJ branch migration allows RuvC to scan DNA until it finds its consensus sequence, where it cleaves and resolves the cruciform DNA. This chain is Holliday junction branch migration complex subunit RuvA, found in Rickettsia conorii (strain ATCC VR-613 / Malish 7).